Here is a 435-residue protein sequence, read N- to C-terminus: E3 ubiquitin-protein ligase RNFT1 (435 aa).

The interval Met1–Cys62 is disordered. Residues Gly16 to Tyr34 are compositionally biased toward basic and acidic residues. Polar residues predominate over residues Ala40–Cys62. The next 6 helical transmembrane spans lie at Ile158–Gly178, Ile203–Phe223, Ile233–Ile253, Phe256–Ile276, Thr298–Val318, and Leu323–Leu343. A required for ubiquitin ligase activity and for protection against ER stress-induced cell death region spans residues Cys368–His419. Residues Cys375–Arg413 form an RING-type zinc finger.

As to expression, expressed at highest levels in testis, lower levels in heart, liver, lung, and kidney. Not detected in brain, ovary, and uterus. Down-regulated in testis from patients with maturation arrest (MA) or Sertoli cell-only syndrome (SCOS). Ubiquitously expressed with high expression in testis.

Its subcellular location is the endoplasmic reticulum membrane. The catalysed reaction is S-ubiquitinyl-[E2 ubiquitin-conjugating enzyme]-L-cysteine + [acceptor protein]-L-lysine = [E2 ubiquitin-conjugating enzyme]-L-cysteine + N(6)-ubiquitinyl-[acceptor protein]-L-lysine.. It participates in protein modification; protein ubiquitination. Functionally, E3 ubiquitin-protein ligase that acts in the endoplasmic reticulum (ER)-associated degradation (ERAD) pathway, which targets misfolded proteins that accumulate in the endoplasmic reticulum (ER) for ubiquitination and subsequent proteasome-mediated degradation. Protects cells from ER stress-induced apoptosis. The polypeptide is E3 ubiquitin-protein ligase RNFT1 (RNFT1) (Homo sapiens (Human)).